The primary structure comprises 66 residues: Alpha-actitoxin-Ms11a-1 (66 aa).

The signal sequence occupies residues 1–24 (MASKIFFVLAVFLVMSAVLPESFA). Intrachain disulfides connect Cys-26–Cys-41, Cys-33–Cys-46, and Cys-40–Cys-61.

The protein localises to the secreted. It localises to the nematocyst. Alpha-toxins act on postsynaptic membranes, they bind to the nicotinic acetylcholine receptors (nAChR) and thus inhibit them. This toxin competes with alpha-bungarotoxin for binding to orthosteric sites on muscle-type T.carlifornicus (IC(50)=408 nM) and human alpha-7/CHRNA7 nAChRs (IC(50)=14.16 uM). The chain is Alpha-actitoxin-Ms11a-1 from Metridium senile (Brown sea anemone).